A 298-amino-acid polypeptide reads, in one-letter code: 4-hydroxy-tetrahydrodipicolinate synthase (298 aa).

T48 contacts pyruvate. Y137 acts as the Proton donor/acceptor in catalysis. K166 acts as the Schiff-base intermediate with substrate in catalysis. I207 lines the pyruvate pocket.

It belongs to the DapA family. In terms of assembly, homotetramer; dimer of dimers.

Its subcellular location is the cytoplasm. The enzyme catalyses L-aspartate 4-semialdehyde + pyruvate = (2S,4S)-4-hydroxy-2,3,4,5-tetrahydrodipicolinate + H2O + H(+). Its pathway is amino-acid biosynthesis; L-lysine biosynthesis via DAP pathway; (S)-tetrahydrodipicolinate from L-aspartate: step 3/4. Catalyzes the condensation of (S)-aspartate-beta-semialdehyde [(S)-ASA] and pyruvate to 4-hydroxy-tetrahydrodipicolinate (HTPA). The chain is 4-hydroxy-tetrahydrodipicolinate synthase from Campylobacter jejuni subsp. jejuni serotype O:2 (strain ATCC 700819 / NCTC 11168).